A 282-amino-acid polypeptide reads, in one-letter code: Orotidine 5'-phosphate decarboxylase (282 aa).

The Proton donor role is filled by Lys95.

This sequence belongs to the OMP decarboxylase family. Type 2 subfamily.

It catalyses the reaction orotidine 5'-phosphate + H(+) = UMP + CO2. It functions in the pathway pyrimidine metabolism; UMP biosynthesis via de novo pathway; UMP from orotate: step 2/2. The chain is Orotidine 5'-phosphate decarboxylase from Polaromonas naphthalenivorans (strain CJ2).